Here is a 318-residue protein sequence, read N- to C-terminus: Ribosomal RNA small subunit methyltransferase H (318 aa).

S-adenosyl-L-methionine is bound by residues 37–39 (GGH), Asp-57, Phe-83, Asp-104, and Gln-111.

The protein belongs to the methyltransferase superfamily. RsmH family.

The protein resides in the cytoplasm. It catalyses the reaction cytidine(1402) in 16S rRNA + S-adenosyl-L-methionine = N(4)-methylcytidine(1402) in 16S rRNA + S-adenosyl-L-homocysteine + H(+). Specifically methylates the N4 position of cytidine in position 1402 (C1402) of 16S rRNA. In Neisseria gonorrhoeae (strain ATCC 700825 / FA 1090), this protein is Ribosomal RNA small subunit methyltransferase H.